A 264-amino-acid chain; its full sequence is Cell division protein FtsQ (264 aa).

Positions 1–24 (MAGPTTAERGARQQESSGPPRVRR) are disordered. The Cytoplasmic portion of the chain corresponds to 1–32 (MAGPTTAERGARQQESSGPPRVRRFRPPRLRT). The chain crosses the membrane as a helical span at residues 33-53 (IIILAVALVLVAGGTVWVLYG). Over 54–264 (SNWTRLERVS…VATAPASSGS (211 aa)) the chain is Extracellular. The 70-residue stretch at 57 to 126 (TRLERVSVSG…HGIGLKVTER (70 aa)) folds into the POTRA domain.

Belongs to the FtsQ/DivIB family. FtsQ subfamily.

It is found in the cell membrane. Its function is as follows. Essential cell division protein. The sequence is that of Cell division protein FtsQ from Streptomyces coelicolor (strain ATCC BAA-471 / A3(2) / M145).